Consider the following 834-residue polypeptide: Copper-exporting P-type ATPase (834 aa).

Residues 2–186 (SQTIDLTLDG…TAVATMKRFR (185 aa)) lie on the Cytoplasmic side of the membrane. 2 HMA domains span residues 3-64 (QTID…YDAS) and 99-162 (DSQQ…YGAE). The Cu(+) site is built by Cys14, Cys17, Cys110, and Cys113. 2 short sequence motifs (CXXC motif) span residues 14-17 (CGHC) and 110-113 (CASC). Residues 187–207 (WQAIVALAVGIPVMVWGMIGD) form a helical membrane-spanning segment. At 208–217 (NMMVTADNRS) the chain is on the periplasmic; loop 1 side. A helical membrane pass occupies residues 218–238 (LWLVIGLITLAVMVFAGGHFY). The Cytoplasmic segment spans residues 239-253 (RSAWKSLLNGAATMD). The helical transmembrane segment at 254–274 (TLVALGTGVAWLYSMSVNLWP) threads the bilayer. Residues 275 to 283 (QWFPMEARH) are Periplasmic; loop 2-facing. Residues 284-304 (LYYEASAMIIGLINLGHMLEA) traverse the membrane as a helical segment. The Cytoplasmic portion of the chain corresponds to 305 to 437 (RARQRSSKAL…EIGQLADKIS (133 aa)). Residues 438–458 (AVFVPVVVVIALVSAAIWYFF) traverse the membrane as a helical segment. Topologically, residues 459–463 (GPAPQ) are periplasmic; loop 3. Residues 464–484 (IVYTLVIATTVLIIACPCALG) form a helical membrane-spanning segment. Residues 485–778 (LATPMSIISG…ATLHNMKQNL (294 aa)) are Cytoplasmic-facing. Asp523 functions as the 4-aspartylphosphate intermediate in the catalytic mechanism. Mg(2+) is bound by residues Asp720 and Asp724. Residues 779–799 (LGAFIYNSIGIPVAAGILWPF) form a helical membrane-spanning segment. Position 800 (Thr800) is a topological domain, periplasmic; loop 4. A helical transmembrane segment spans residues 801-821 (GTLLNPVVAGAAMALSSITVV). Residues 822 to 834 (SNANRLLRFKPKE) are Cytoplasmic-facing.

The protein belongs to the cation transport ATPase (P-type) (TC 3.A.3) family. Type IB subfamily. In terms of assembly, copper-exporting P-type ATPase interacts with apo-periplasmic copper chaperone CusF; when CusF is precharged with copper it binds very little CopA. The periplasmic loops of CopA, especially the first half of loop 1, play a large role in binding to CusF.

Its subcellular location is the cell inner membrane. It is found in the cytoplasm. It carries out the reaction Cu(+)(in) + ATP + H2O = Cu(+)(out) + ADP + phosphate + H(+). With respect to regulation, export is inhibited by vanadate. Phosphorylation is inhibited by vanadate and sensitive to KOH and hydroxylamine; it is not inhibited by azide. Phosphorylation is Cu(+) not Cu(2+)-dependent. ATPase activity is inhibited by bathocuproindisulfonate (BCDS), which chelates Cu(+) but not Cu(2+), and stimulated 3-4-fold by Cu(+). ATPase activity is inhibited by Cu(2+) plus DTT or Ag(+). In terms of biological role, exports Cu(+) from the cytoplasm to the periplasm. Binds 2 Cu(+) ions per monomer, which are transferred to periplasmic copper chaperone CusF upon ATP hydrolysis. In vitro an excess of CusF over CopA is required for efficient transfer. May also be involved in silver export. Its function is as follows. mRNA is subject to programmed ribosomal frameshifting which produces a cytoplasmic copper chaperone CopA(Z) that corresponds to the first HMA domain. The soluble form is essential for cell survivial in the presence of CuSO(4); in growth competition experiments between wild-type and a version that prevents expression of CopA(Z) after 50 generations the non-CopA(Z) version is nearly extinct. The first HMA domain (residues 1-70) can be replaced by B.subtilis Cu chaperone CopZ. The chain is Copper-exporting P-type ATPase from Escherichia coli (strain K12).